The following is a 771-amino-acid chain: MAKKSNKSNKLSTLQKPSQKDFILTIDSDSEGENEIPDLEEESEVDQELKEEEKPKPKPKPKSKKNKKNKDINNDQEKTEEQEEINPNFTFSLDGFETSTAFDGWDFKVESNGDVTKKPISKDVDLDGILRRKGGLANLAGSDVKVDEKNDEVESEEVEEVEEDDEDEENEQEGDDDDDELALDGFGMSATEASANADDDQDEQEPEDDDEGVEADMDEEYPGSDQEDEKPVEDTAEDMAEFYADEEEATTAKKQLHTTFQSLQLSRPVLKGLSQLGYTKPSPIQSACIPIALLGKDIVAGAVTGSGKTAAYMIPIIERLLYKPAKISSTRVIVLAPTRELAIQVCDVGKKIGQFVNNLNFGLAVGGLNLRQQEQQLKTRPDIVIATPGRLIDHIRNSPSFSIDSLEVLVIDEADRMLDEGFQAELTEILSLIPRHKRQTLLYSATMNTKIQDLIQLSLQKPVRVMIDPPKSAAIKLVQEFVRIRKRDHLKPALLFQLIKSVDPSQQNRIVVFVARKESAHKLRIILGLLGMRVSELHGSLTQEQRLASVNDFKNLTVPVLICTDLAARGLDIPKIEIVINYDMPKTHEIYLHRVGRTARAGREGKSITFVGESTQDRAIVKDAIKSISEEQARNSKQGKAVSRNVDWKEVEELNKIVESKATVIEEVLDEEKQAKEMLHAEMELSKATNMIKHEKEIQSRPRRTWFESEKDKKHQTEVMQQLTKHGKKVNSHKRKAIEVKKENSSRSYKKTKQDRMSVQKKPKSNGKNKK.

3 disordered regions span residues 1-96, 109-128, and 134-233; these read MAKK…LDGF, VESN…DLDG, and GGLA…KPVE. Over residues 28–46 the composition is skewed to acidic residues; sequence SDSEGENEIPDLEEESEVD. Positions 33–84 form a coiled coil; it reads ENEIPDLEEESEVDQELKEEEKPKPKPKPKSKKNKKNKDINNDQEKTEEQEE. The span at 47 to 56 shows a compositional bias: basic and acidic residues; that stretch reads QELKEEEKPK. The span at 57 to 68 shows a compositional bias: basic residues; it reads PKPKPKSKKNKK. A compositionally biased stretch (basic and acidic residues) spans 69 to 79; sequence NKDINNDQEKT. Residues 85 to 96 are compositionally biased toward polar residues; it reads INPNFTFSLDGF. Composition is skewed to acidic residues over residues 149–182 and 197–233; these read KNDE…DELA and ADDD…KPVE. The Q motif signature appears at 258 to 286; that stretch reads TTFQSLQLSRPVLKGLSQLGYTKPSPIQS. One can recognise a Helicase ATP-binding domain in the interval 289 to 465; the sequence is IPIALLGKDI…QLSLQKPVRV (177 aa). Residue 302–309 participates in ATP binding; that stretch reads AVTGSGKT. A DEAD box motif is present at residues 412-415; it reads DEAD. Positions 476-643 constitute a Helicase C-terminal domain; that stretch reads KLVQEFVRIR…RNSKQGKAVS (168 aa). The span at 695–717 shows a compositional bias: basic and acidic residues; the sequence is EKEIQSRPRRTWFESEKDKKHQT. The interval 695-771 is disordered; that stretch reads EKEIQSRPRR…KPKSNGKNKK (77 aa). Composition is skewed to basic residues over residues 725–736 and 759–771; these read KHGKKVNSHKRK and VQKK…KNKK.

Belongs to the DEAD box helicase family. DDX27/DRS1 subfamily. As to quaternary structure, associates with pre-ribosomal particles.

It localises to the nucleus. The protein localises to the nucleolus. The catalysed reaction is ATP + H2O = ADP + phosphate + H(+). Its function is as follows. ATP-binding RNA helicase involved in ribosome assembly. The sequence is that of ATP-dependent RNA helicase DRS1 (DRS1) from Debaryomyces hansenii (strain ATCC 36239 / CBS 767 / BCRC 21394 / JCM 1990 / NBRC 0083 / IGC 2968) (Yeast).